The chain runs to 429 residues: Ribosomal RNA small subunit methyltransferase B (429 aa).

Residues 254 to 260 (CAAPGGK), Asp-277, Asp-303, and Asp-322 each bind S-adenosyl-L-methionine. Residue Cys-375 is the Nucleophile of the active site.

It belongs to the class I-like SAM-binding methyltransferase superfamily. RsmB/NOP family.

It localises to the cytoplasm. The catalysed reaction is cytidine(967) in 16S rRNA + S-adenosyl-L-methionine = 5-methylcytidine(967) in 16S rRNA + S-adenosyl-L-homocysteine + H(+). In terms of biological role, specifically methylates the cytosine at position 967 (m5C967) of 16S rRNA. The protein is Ribosomal RNA small subunit methyltransferase B of Escherichia fergusonii (strain ATCC 35469 / DSM 13698 / CCUG 18766 / IAM 14443 / JCM 21226 / LMG 7866 / NBRC 102419 / NCTC 12128 / CDC 0568-73).